We begin with the raw amino-acid sequence, 202 residues long: NNYCKIKCRSGIHTLCKYGTSTKPNCGKNVVKASGLTKQENLEILKQHNEFRQKVARGLETRGNPGPQPPAKSMNTLVWNDELAQIAQVWANQCNYGHDNCRNSAKYSVGQNIAEGSTSADNFVNVSNMVKMWEDEVKDYQYGSPKNKLNKVGHYTQMVWAKTKEIGCGSEDYIEDGWHRHYLVCNYGPAGNVGNEPIYERK.

4 cysteine pairs are disulfide-bonded: C4/C16, C8/C101, C26/C94, and C168/C185. The SCP domain occupies 46-187 (KQHNEFRQKV…WHRHYLVCNY (142 aa)).

It belongs to the CRISP family. Venom allergen 5-like subfamily. Expressed by the venom gland.

It localises to the secreted. This is Venom allergen 5.02 from Vespa crabro (European hornet).